A 227-amino-acid chain; its full sequence is Thiamine-phosphate synthase (227 aa).

Residues 46 to 50 (QLRDK) and Asn87 contribute to the 4-amino-2-methyl-5-(diphosphooxymethyl)pyrimidine site. Residues Asp88 and Asp107 each contribute to the Mg(2+) site. Residue Ser126 coordinates 4-amino-2-methyl-5-(diphosphooxymethyl)pyrimidine. 152–154 (TPT) serves as a coordination point for 2-[(2R,5Z)-2-carboxy-4-methylthiazol-5(2H)-ylidene]ethyl phosphate. A 4-amino-2-methyl-5-(diphosphooxymethyl)pyrimidine-binding site is contributed by Lys155. Position 183 (Gly183) interacts with 2-[(2R,5Z)-2-carboxy-4-methylthiazol-5(2H)-ylidene]ethyl phosphate.

It belongs to the thiamine-phosphate synthase family. Mg(2+) is required as a cofactor.

The enzyme catalyses 2-[(2R,5Z)-2-carboxy-4-methylthiazol-5(2H)-ylidene]ethyl phosphate + 4-amino-2-methyl-5-(diphosphooxymethyl)pyrimidine + 2 H(+) = thiamine phosphate + CO2 + diphosphate. The catalysed reaction is 2-(2-carboxy-4-methylthiazol-5-yl)ethyl phosphate + 4-amino-2-methyl-5-(diphosphooxymethyl)pyrimidine + 2 H(+) = thiamine phosphate + CO2 + diphosphate. It carries out the reaction 4-methyl-5-(2-phosphooxyethyl)-thiazole + 4-amino-2-methyl-5-(diphosphooxymethyl)pyrimidine + H(+) = thiamine phosphate + diphosphate. Its pathway is cofactor biosynthesis; thiamine diphosphate biosynthesis; thiamine phosphate from 4-amino-2-methyl-5-diphosphomethylpyrimidine and 4-methyl-5-(2-phosphoethyl)-thiazole: step 1/1. Functionally, condenses 4-methyl-5-(beta-hydroxyethyl)thiazole monophosphate (THZ-P) and 2-methyl-4-amino-5-hydroxymethyl pyrimidine pyrophosphate (HMP-PP) to form thiamine monophosphate (TMP). The sequence is that of Thiamine-phosphate synthase from Mycolicibacterium smegmatis (strain ATCC 700084 / mc(2)155) (Mycobacterium smegmatis).